We begin with the raw amino-acid sequence, 658 residues long: UvrABC system protein B (658 aa).

The Helicase ATP-binding domain maps to 26–414 (DGLRRGVKHQ…PGVVEQIIRP (389 aa)). An ATP-binding site is contributed by 39–46 (GATGTGKT). Residues 92 to 115 (YYDYYQPEAYVPQTDTYIEKDAKI) carry the Beta-hairpin motif. The Helicase C-terminal domain maps to 430–596 (QIDDLIGEIR…TVKKEIRDVI (167 aa)). Positions 622–657 (EELIRTLEAEMKEAAKALDFERAAQLRDIIFELKAE) constitute a UVR domain.

Belongs to the UvrB family. Forms a heterotetramer with UvrA during the search for lesions. Interacts with UvrC in an incision complex.

It is found in the cytoplasm. The UvrABC repair system catalyzes the recognition and processing of DNA lesions. A damage recognition complex composed of 2 UvrA and 2 UvrB subunits scans DNA for abnormalities. Upon binding of the UvrA(2)B(2) complex to a putative damaged site, the DNA wraps around one UvrB monomer. DNA wrap is dependent on ATP binding by UvrB and probably causes local melting of the DNA helix, facilitating insertion of UvrB beta-hairpin between the DNA strands. Then UvrB probes one DNA strand for the presence of a lesion. If a lesion is found the UvrA subunits dissociate and the UvrB-DNA preincision complex is formed. This complex is subsequently bound by UvrC and the second UvrB is released. If no lesion is found, the DNA wraps around the other UvrB subunit that will check the other stand for damage. The chain is UvrABC system protein B from Geobacillus kaustophilus (strain HTA426).